The following is a 356-amino-acid chain: 1-deoxy-D-xylulose 5-phosphate reductoisomerase (356 aa).

Positions 7, 8, 9, 10, 31, 33, and 111 each coordinate NADPH. Lys-112 provides a ligand contact to 1-deoxy-D-xylulose 5-phosphate. Position 113 (Glu-113) interacts with NADPH. Asp-131 lines the Mn(2+) pocket. Ser-132, Glu-133, Ser-155, and His-178 together coordinate 1-deoxy-D-xylulose 5-phosphate. Glu-133 contributes to the Mn(2+) binding site. Gly-184 serves as a coordination point for NADPH. 4 residues coordinate 1-deoxy-D-xylulose 5-phosphate: Ser-191, Asn-196, Lys-197, and Glu-200. Glu-200 lines the Mn(2+) pocket.

The protein belongs to the DXR family. It depends on Mg(2+) as a cofactor. The cofactor is Mn(2+).

It carries out the reaction 2-C-methyl-D-erythritol 4-phosphate + NADP(+) = 1-deoxy-D-xylulose 5-phosphate + NADPH + H(+). Its pathway is isoprenoid biosynthesis; isopentenyl diphosphate biosynthesis via DXP pathway; isopentenyl diphosphate from 1-deoxy-D-xylulose 5-phosphate: step 1/6. In terms of biological role, catalyzes the NADPH-dependent rearrangement and reduction of 1-deoxy-D-xylulose-5-phosphate (DXP) to 2-C-methyl-D-erythritol 4-phosphate (MEP). The polypeptide is 1-deoxy-D-xylulose 5-phosphate reductoisomerase (Campylobacter jejuni subsp. jejuni serotype O:6 (strain 81116 / NCTC 11828)).